A 356-amino-acid polypeptide reads, in one-letter code: Protein-glutamate methylesterase/protein-glutamine glutaminase 2 (356 aa).

The region spanning 7–124 (KVLCVDDSAL…RDGLMEYTDT (118 aa)) is the Response regulatory domain. D58 is subject to 4-aspartylphosphate. Positions 157 to 349 (LLSTEKLIIL…QRVMARLATY (193 aa)) constitute a CheB-type methylesterase domain. Active-site residues include S169, H195, and D291.

This sequence belongs to the CheB family. In terms of processing, phosphorylated by CheA. Phosphorylation of the N-terminal regulatory domain activates the methylesterase activity.

Its subcellular location is the cytoplasm. The catalysed reaction is [protein]-L-glutamate 5-O-methyl ester + H2O = L-glutamyl-[protein] + methanol + H(+). The enzyme catalyses L-glutaminyl-[protein] + H2O = L-glutamyl-[protein] + NH4(+). In terms of biological role, involved in chemotaxis. Part of a chemotaxis signal transduction system that modulates chemotaxis in response to various stimuli. Catalyzes the demethylation of specific methylglutamate residues introduced into the chemoreceptors (methyl-accepting chemotaxis proteins or MCP) by CheR. Also mediates the irreversible deamidation of specific glutamine residues to glutamic acid. This is Protein-glutamate methylesterase/protein-glutamine glutaminase 2 from Cupriavidus pinatubonensis (strain JMP 134 / LMG 1197) (Cupriavidus necator (strain JMP 134)).